The primary structure comprises 231 residues: MGQKINPIGLRLGINRTWDSRWYAGKNEYGRLLHEDVRIRELLHKELKQAAVARIVIERPHKKCRVTIHSARPGVVIGKKGADIDKLRKRVADITSSDVVINIVEIRKPELDATLVAESIAQQLERRVAFRRAMKRAVQSAMRLGAEGIRINCSGRLGGAEIARMEWYREGRVPLHTLRADVDYGVATAFTTFGTCGVKVWIFKGEILEHDPMAQDKRLAGDDNRPRRDAA.

The region spanning 39-107 (IRELLHKELK…DVVINIVEIR (69 aa)) is the KH type-2 domain.

This sequence belongs to the universal ribosomal protein uS3 family. Part of the 30S ribosomal subunit. Forms a tight complex with proteins S10 and S14.

Functionally, binds the lower part of the 30S subunit head. Binds mRNA in the 70S ribosome, positioning it for translation. In Nitrobacter hamburgensis (strain DSM 10229 / NCIMB 13809 / X14), this protein is Small ribosomal subunit protein uS3.